Here is a 437-residue protein sequence, read N- to C-terminus: Trigger factor (437 aa).

A PPIase FKBP-type domain is found at 163–248 (GDRVIIDFEG…LNNVSEPTLP (86 aa)).

This sequence belongs to the FKBP-type PPIase family. Tig subfamily.

It is found in the cytoplasm. It carries out the reaction [protein]-peptidylproline (omega=180) = [protein]-peptidylproline (omega=0). Functionally, involved in protein export. Acts as a chaperone by maintaining the newly synthesized protein in an open conformation. Functions as a peptidyl-prolyl cis-trans isomerase. The polypeptide is Trigger factor (Neisseria gonorrhoeae (strain NCCP11945)).